Consider the following 60-residue polypeptide: Large ribosomal subunit protein bL32 (60 aa).

This sequence belongs to the bacterial ribosomal protein bL32 family.

The protein is Large ribosomal subunit protein bL32 of Streptococcus pneumoniae serotype 19F (strain G54).